A 488-amino-acid polypeptide reads, in one-letter code: MAETERLMPNGGSRETKPLITGHLILGTIVACLGSIQYGYHIAELNAPQEFLSCSRFEAPDENISYDDTWVGQHGLKQCIALTDSQYGAITSIFSIGGLFGSYYAGNWANRYGRKYVSMGASAMCMVSSLLLFFSNSYLQLLFGRFLVGMSCGTAIVITPLFINEIAPVEWRGAMGSMNQVSINLGILLTQTLALKYADSYNWRWLLFSGSVIAVANILAWLKVDESPRWLVSHGFVSEAETALFKLRPGTYQQAKQEIQDWQRSHGHNRDPESSEETHSGPTLWQYVTDPSYKKPRTVILAILSCQQFCGINSIIFYGVKVIGKILPDYSIQVNFAISILNVVVTLAASAIIDHVGRRPLLLASTTVMTAMSLLISVGLTLSVSFLLVTATFVYIAAFAIGLGPIPFLIIGELSYPQDAATAQSFGTVCNWLATFIVGYLFPIGHGLMGGYVFAIFAAIAAMFATYVYKRVPETKGKTTYSEVWAGY.

Topologically, residues 1–18 (MAETERLMPNGGSRETKP) are cytoplasmic. The helical transmembrane segment at 19 to 39 (LITGHLILGTIVACLGSIQYG) threads the bilayer. The Vacuolar portion of the chain corresponds to 40-87 (YHIAELNAPQEFLSCSRFEAPDENISYDDTWVGQHGLKQCIALTDSQY). Asn-63 carries an N-linked (GlcNAc...) asparagine glycan. A helical transmembrane segment spans residues 88-108 (GAITSIFSIGGLFGSYYAGNW). At 109-121 (ANRYGRKYVSMGA) the chain is on the cytoplasmic side. A helical transmembrane segment spans residues 122-142 (SAMCMVSSLLLFFSNSYLQLL). Residues 143–146 (FGRF) are Vacuolar-facing. The helical transmembrane segment at 147–167 (LVGMSCGTAIVITPLFINEIA) threads the bilayer. The Cytoplasmic portion of the chain corresponds to 168-178 (PVEWRGAMGSM). A helical membrane pass occupies residues 179 to 198 (NQVSINLGILLTQTLALKYA). Over 199–204 (DSYNWR) the chain is Vacuolar. Residues 205 to 225 (WLLFSGSVIAVANILAWLKVD) traverse the membrane as a helical segment. The Cytoplasmic portion of the chain corresponds to 226 to 299 (ESPRWLVSHG…DPSYKKPRTV (74 aa)). Residues 258–279 (EIQDWQRSHGHNRDPESSEETH) show a composition bias toward basic and acidic residues. The segment at 258-281 (EIQDWQRSHGHNRDPESSEETHSG) is disordered. Residues 300–320 (ILAILSCQQFCGINSIIFYGV) traverse the membrane as a helical segment. Over 321–322 (KV) the chain is Vacuolar. A helical transmembrane segment spans residues 323-337 (IGKILPDYSIQVNFA). Residues 338-344 (ISILNVV) lie on the Cytoplasmic side of the membrane. Residues 345-364 (VTLAASAIIDHVGRRPLLLA) traverse the membrane as a helical segment. The Vacuolar portion of the chain corresponds to 365–390 (STTVMTAMSLLISVGLTLSVSFLLVT). Residues 391–411 (ATFVYIAAFAIGLGPIPFLII) form a helical membrane-spanning segment. Topologically, residues 412-419 (GELSYPQD) are cytoplasmic. A helical transmembrane segment spans residues 420 to 442 (AATAQSFGTVCNWLATFIVGYLF). Residues 443–446 (PIGH) lie on the Vacuolar side of the membrane. The chain crosses the membrane as a helical span at residues 447 to 463 (GLMGGYVFAIFAAIAAM). At 464–488 (FATYVYKRVPETKGKTTYSEVWAGY) the chain is on the cytoplasmic side.

It belongs to the major facilitator superfamily. Sugar transporter (TC 2.A.1.1) family.

It localises to the vacuole membrane. The polypeptide is Probable metabolite transport protein YBR241C (Saccharomyces cerevisiae (strain ATCC 204508 / S288c) (Baker's yeast)).